The following is a 622-amino-acid chain: Low affinity potassium transport system protein Kup (622 aa).

The next 12 helical transmembrane spans lie at 9 to 29 (LPAI…TSPL), 49 to 69 (VFGF…IKYL), 103 to 123 (VIMG…TPAI), 137 to 157 (PQLD…LFMI), 165 to 185 (VGKL…GLGL), 213 to 233 (VSFI…ALYA), 247 to 267 (WFTV…ALLL), 276 to 296 (PFFL…AALA), 337 to 357 (IYIP…IVSF), 363 to 383 (LAAA…ILST), 396 to 416 (FVAL…TANL), and 419 to 439 (LLSG…VMTT).

Belongs to the HAK/KUP transporter (TC 2.A.72) family.

It localises to the cell inner membrane. The catalysed reaction is K(+)(in) + H(+)(in) = K(+)(out) + H(+)(out). Its function is as follows. Responsible for the low-affinity transport of potassium into the cell. Likely operates as a K(+):H(+) symporter. This Shigella boydii serotype 18 (strain CDC 3083-94 / BS512) protein is Low affinity potassium transport system protein Kup.